A 957-amino-acid polypeptide reads, in one-letter code: Glycine dehydrogenase (decarboxylating) (957 aa).

Lysine 708 bears the N6-(pyridoxal phosphate)lysine mark.

This sequence belongs to the GcvP family. The glycine cleavage system is composed of four proteins: P, T, L and H. The cofactor is pyridoxal 5'-phosphate.

The catalysed reaction is N(6)-[(R)-lipoyl]-L-lysyl-[glycine-cleavage complex H protein] + glycine + H(+) = N(6)-[(R)-S(8)-aminomethyldihydrolipoyl]-L-lysyl-[glycine-cleavage complex H protein] + CO2. In terms of biological role, the glycine cleavage system catalyzes the degradation of glycine. The P protein binds the alpha-amino group of glycine through its pyridoxal phosphate cofactor; CO(2) is released and the remaining methylamine moiety is then transferred to the lipoamide cofactor of the H protein. This chain is Glycine dehydrogenase (decarboxylating), found in Shigella boydii serotype 4 (strain Sb227).